Here is a 341-residue protein sequence, read N- to C-terminus: Oxidoreductase swnN (341 aa).

It belongs to the NmrA-type oxidoreductase family. Isoflavone reductase subfamily.

It functions in the pathway mycotoxin biosynthesis. In terms of biological role, oxidoreductase; part of the gene cluster that mediates the biosynthesis of swainsonine (SW), a cytotoxic fungal alkaloid and a potential cancer therapy drug. Swainsonine production occurs via a multibranched pathway and is dispensable for fungal colonization of plants and infection of insect hosts. The first step of swainsonine biosynthesis is the production of the precursor pipecolic acid (PA) via conversion of L-lysine (Lys) to 1-piperideine-6-carboxylate (P6C) by the aminotransferase swnA, the latter being further reduced to PA by the reductase swnR. PA can be converted from lysine by both the SW biosynthetic cluster and the unclustered genes such as lysine cyclodeaminase. The PKS-NRPS hybrid synthetase swnK uptakes and condensates PA and malonyl-CoA with and without skipping of the ketoreductase (KR) domain in order to produce 3 intermediates, 1-oxoindolizidine, (1S)-1-hydroxyindolizin, and (1R)-1-hydroxyindolizine; with the transisomer (1S)-1-hydroxyindolizin being predominant. The terminal thioester reductase (TE) domain of swnK is involved in reduction of the thioester bond to release the intermediate aldehydes. The oxidoreductase swnN could contribute to the reduction of 1-oxoindolizidine to (1S)-1-hydroxyindolizin and (1R)-1-hydroxyindolizine, contributing to the major route of SW production. The dioxygenase swnH2 would be responsible for the oxidization of (1R)-1-hydroxyindolizine into (1R,2S)-1,2-dihydroxyindolizine and of (1S)-1-hydroxyindolizin to yield both (1R,2S)-1,2-dihydroxyindolizine and (1S,2S)-1,2-dihydroxyindolizine. The dioxygenase swnH1 then performs the conversion of the 1,2-dihydroxyindolizine epimers to SW. This Metarhizium robertsii (strain ARSEF 23 / ATCC MYA-3075) (Metarhizium anisopliae (strain ARSEF 23)) protein is Oxidoreductase swnN.